Consider the following 86-residue polypeptide: Co-chaperonin GroES (86 aa).

This sequence belongs to the GroES chaperonin family. In terms of assembly, heptamer of 7 subunits arranged in a ring. Interacts with the chaperonin GroEL.

The protein resides in the cytoplasm. Its function is as follows. Together with the chaperonin GroEL, plays an essential role in assisting protein folding. The GroEL-GroES system forms a nano-cage that allows encapsulation of the non-native substrate proteins and provides a physical environment optimized to promote and accelerate protein folding. GroES binds to the apical surface of the GroEL ring, thereby capping the opening of the GroEL channel. In Campylobacter lari (strain RM2100 / D67 / ATCC BAA-1060), this protein is Co-chaperonin GroES.